A 651-amino-acid chain; its full sequence is Mediator of RNA polymerase II transcription subunit 17 (651 aa).

The segment at 51 to 83 (QGSGSEEEEAAGAEGDAQDWAGAGSSADQDDEE) is disordered. The segment covering 62–74 (GAEGDAQDWAGAG) has biased composition (low complexity).

The protein belongs to the Mediator complex subunit 17 family. Component of the Mediator complex, which is composed of MED1, MED4, MED6, MED7, MED8, MED9, MED10, MED11, MED12, MED13, MED13L, MED14, MED15, MED16, MED17, MED18, MED19, MED20, MED21, MED22, MED23, MED24, MED25, MED26, MED27, MED29, MED30, MED31, CCNC, CDK8 and CDC2L6/CDK11. The MED12, MED13, CCNC and CDK8 subunits form a distinct module termed the CDK8 module. Mediator containing the CDK8 module is less active than Mediator lacking this module in supporting transcriptional activation. Individual preparations of the Mediator complex lacking one or more distinct subunits have been variously termed ARC, CRSP, DRIP, PC2, SMCC and TRAP. Interacts with GATA1, PPARG and STAT2.

The protein resides in the nucleus. Its function is as follows. Component of the Mediator complex, a coactivator involved in the regulated transcription of nearly all RNA polymerase II-dependent genes. Mediator functions as a bridge to convey information from gene-specific regulatory proteins to the basal RNA polymerase II transcription machinery. Mediator is recruited to promoters by direct interactions with regulatory proteins and serves as a scaffold for the assembly of a functional preinitiation complex with RNA polymerase II and the general transcription factors. The polypeptide is Mediator of RNA polymerase II transcription subunit 17 (MED17) (Bos taurus (Bovine)).